The sequence spans 364 residues: Probable dual-specificity RNA methyltransferase RlmN (364 aa).

E109 (proton acceptor) is an active-site residue. The Radical SAM core domain maps to 123 to 351 (PKARLTVCVS…VSVRYSRGLE (229 aa)). C130 and C356 form a disulfide bridge. [4Fe-4S] cluster is bound by residues C137, C141, and C144. Residues 184–185 (GE), S214, 237–239 (SLH), and N313 each bind S-adenosyl-L-methionine. Catalysis depends on C356, which acts as the S-methylcysteine intermediate.

Belongs to the radical SAM superfamily. RlmN family. The cofactor is [4Fe-4S] cluster.

Its subcellular location is the cytoplasm. It catalyses the reaction adenosine(2503) in 23S rRNA + 2 reduced [2Fe-2S]-[ferredoxin] + 2 S-adenosyl-L-methionine = 2-methyladenosine(2503) in 23S rRNA + 5'-deoxyadenosine + L-methionine + 2 oxidized [2Fe-2S]-[ferredoxin] + S-adenosyl-L-homocysteine. The enzyme catalyses adenosine(37) in tRNA + 2 reduced [2Fe-2S]-[ferredoxin] + 2 S-adenosyl-L-methionine = 2-methyladenosine(37) in tRNA + 5'-deoxyadenosine + L-methionine + 2 oxidized [2Fe-2S]-[ferredoxin] + S-adenosyl-L-homocysteine. In terms of biological role, specifically methylates position 2 of adenine 2503 in 23S rRNA and position 2 of adenine 37 in tRNAs. This chain is Probable dual-specificity RNA methyltransferase RlmN, found in Nostoc punctiforme (strain ATCC 29133 / PCC 73102).